Consider the following 154-residue polypeptide: MGSVLVDLQIATENIEGLPTEEQIVQWATGAVQPEGNEVEMTVRIVDEAESHELNLTYRGKDRPTNVLSFPFECPDEVELPLLGDLVICRQVVEREASEQEKPLMAHWAHMVVHGSLHLLGYDHIEDDEAEEMESLETQIMQGLGFDDPYLAEK.

His114, His118, and His124 together coordinate Zn(2+).

Belongs to the endoribonuclease YbeY family. Zn(2+) is required as a cofactor.

It localises to the cytoplasm. Single strand-specific metallo-endoribonuclease involved in late-stage 70S ribosome quality control and in maturation of the 3' terminus of the 16S rRNA. The polypeptide is Endoribonuclease YbeY (Haemophilus influenzae (strain ATCC 51907 / DSM 11121 / KW20 / Rd)).